The sequence spans 78 residues: Large ribosomal subunit protein bL28 (78 aa).

Residues Met-1–Trp-29 form a disordered region.

It belongs to the bacterial ribosomal protein bL28 family.

The polypeptide is Large ribosomal subunit protein bL28 (Corynebacterium glutamicum (strain ATCC 13032 / DSM 20300 / JCM 1318 / BCRC 11384 / CCUG 27702 / LMG 3730 / NBRC 12168 / NCIMB 10025 / NRRL B-2784 / 534)).